We begin with the raw amino-acid sequence, 509 residues long: Photosystem II CP47 reaction center protein (509 aa).

6 consecutive transmembrane segments (helical) span residues 21-36, 101-115, 140-156, 203-218, 237-253, and 458-473; these read AVHM…WAGS, IVFS…IWHW, GIHL…FGAF, IAAG…FHLS, VLSS…AFVV, and SFAL…HGSR.

It belongs to the PsbB/PsbC family. PsbB subfamily. In terms of assembly, PSII is composed of 1 copy each of membrane proteins PsbA, PsbB, PsbC, PsbD, PsbE, PsbF, PsbH, PsbI, PsbJ, PsbK, PsbL, PsbM, PsbT, PsbX, PsbY, PsbZ, Psb30/Ycf12, at least 3 peripheral proteins of the oxygen-evolving complex and a large number of cofactors. It forms dimeric complexes. Binds multiple chlorophylls. PSII binds additional chlorophylls, carotenoids and specific lipids. serves as cofactor.

It localises to the plastid. Its subcellular location is the chloroplast thylakoid membrane. Functionally, one of the components of the core complex of photosystem II (PSII). It binds chlorophyll and helps catalyze the primary light-induced photochemical processes of PSII. PSII is a light-driven water:plastoquinone oxidoreductase, using light energy to abstract electrons from H(2)O, generating O(2) and a proton gradient subsequently used for ATP formation. The protein is Photosystem II CP47 reaction center protein of Populus deltoides (Eastern poplar).